Consider the following 49-residue polypeptide: Large ribosomal subunit protein bL33A (49 aa).

Residues 21–49 (KNKRNNPERVEMKKYCSRDNKHTLHRETK) are disordered. Positions 25 to 49 (NNPERVEMKKYCSRDNKHTLHRETK) are enriched in basic and acidic residues.

It belongs to the bacterial ribosomal protein bL33 family.

This is Large ribosomal subunit protein bL33A from Staphylococcus epidermidis (strain ATCC 35984 / DSM 28319 / BCRC 17069 / CCUG 31568 / BM 3577 / RP62A).